Consider the following 433-residue polypeptide: MEYKVEDVSPVKKKVNVTVPVEEVDAALGAAIAMYRTSVNLDGFRKGKVPASIVENRFRKEIYAEATQDLVNVHINEIVTSLAVSPLSRIDFDGGELERGKEFSYTISFEVMPQFDLPDYEGFAVEQEKAVVDEKEVDEVIARIRRNMAELVPVAETRPGADGDVVVLDFAAFENGEPIEGVSAENFQLSLGEKQSLEDFENLVKTIPAGQEAEGPITFPDDFLNPDFAGKTVTMKVKVHAVKERRLPEIDDALAQKAGGFESMEKMRETVVTSYMQSREQLHKATAQKSMLDKLLKMVDFALPESMVDMYVGNLIEDMRVKMERQGRGLESLGKTPEQLREQVLPEAQQIARSQIFLLAAGRKEAVEVSEQEVDGQLQQLAMRSGQDFDTLKDYYVRNGLIFNLRDRLIADKAMDAIYAKANVTMVDPAPAA.

The region spanning 163–248 (GDVVVLDFAA…VHAVKERRLP (86 aa)) is the PPIase FKBP-type domain.

The protein belongs to the FKBP-type PPIase family. Tig subfamily.

It localises to the cytoplasm. It carries out the reaction [protein]-peptidylproline (omega=180) = [protein]-peptidylproline (omega=0). In terms of biological role, involved in protein export. Acts as a chaperone by maintaining the newly synthesized protein in an open conformation. Functions as a peptidyl-prolyl cis-trans isomerase. The sequence is that of Trigger factor from Nitratidesulfovibrio vulgaris (strain ATCC 29579 / DSM 644 / CCUG 34227 / NCIMB 8303 / VKM B-1760 / Hildenborough) (Desulfovibrio vulgaris).